The sequence spans 59 residues: Large ribosomal subunit protein uL30 (59 aa).

It belongs to the universal ribosomal protein uL30 family. As to quaternary structure, part of the 50S ribosomal subunit.

In Persephonella marina (strain DSM 14350 / EX-H1), this protein is Large ribosomal subunit protein uL30.